Here is a 155-residue protein sequence, read N- to C-terminus: Plastocyanin, chloroplastic (155 aa).

Residues Met1–Ala58 constitute a chloroplast transit peptide. One can recognise a Plastocyanin-like domain in the interval Gln59–Asn155. Residues His95, Cys140, His143, and Met148 each coordinate Cu cation.

This sequence belongs to the plastocyanin family. Cu(2+) is required as a cofactor.

Its subcellular location is the plastid. The protein resides in the chloroplast thylakoid membrane. Participates in electron transfer between P700 and the cytochrome b6-f complex in photosystem I. The sequence is that of Plastocyanin, chloroplastic (PETE) from Hordeum vulgare (Barley).